Consider the following 926-residue polypeptide: MILHKSVFKSYIYVLTYFVFFSVMSCENSSVLQEAKHLTISEGFKNPLGFYDAKPTFSWELPVVEGVISQSAYQIVVASSPDLLPNNPDLWDSNKQSSSQSVWINYEGKPLVSRQKVFWQVKYWNQDDKASNWSPVQNFELGLLNNSDWKAKWIGLPTKEEGVLGSQDNIIHRPQYLRKVFELSNDVANARLYITAKGVFDVAINGEDVSDDVMPPGYTPYKKRIETITYDVTDLIESGQNTIGVEVAAGWHSGRLGWMKSYWSDTESPKILCQLEVTMKDGSKASIISDDTWKATTQGPIRISEIYDGETYDAHLEMPHWTTNSFDDKNWKAVQAFPVTSTIKLEPKRHTTVKSKIVLESKEIILKADAAIFDLQQNMVGVPLLKVPMKMGDTLKIRFAEMLSPDGTFYTDNYRSAQSTDYYIAAKEGTIEWMPKFTFHGFRYVELSGFDASKTPSKNWVKGVVQYSNFNENGSFTSSHEKLNQLQSNIVWGLRGNFFDIPTDCPQRDERMGWTGDAQVFGPTSMFNADVYKFWASWMQSVRESQYDNGGIPFVVPDVLHNGKVSSGWGDVCTIIPWKIYYRTGDVGILEENYDMMKKWVAHHQATSKDFISHMNSFADWLQPYPENGNNKGDTSHSLIGTAFFAHSAKLTAKTAEVLGKKEEQATYEALYKSVAKAFENAFFKNGKVKDVTATQTSYLLALAFDLLSEENKENAKQQLLEKISEADNHLRTGFLGTPLLSEVLDETGEIDLMYKLLFNETYPSWFYSINQGATTIWERWNSYSKAEGFNPMKMNSLNHYAYGAIGEWMYERITGIAPLQAGYKIISIAPIPKAPLTSASATLNTPYGEVASSWEIKNETLFLEVVVPPNTTAEIEIPTDNSESLKVDNENFTNGKNLKLIKNEKRKIKILAQPGTYEFQAKYSL.

Residues 1 to 25 form the signal peptide; it reads MILHKSVFKSYIYVLTYFVFFSVMS. C26 is lipidated: N-palmitoyl cysteine. C26 carries S-diacylglycerol cysteine lipidation. Alpha-L-rhamnose-binding positions include D504, 508-510, D517, and W569; that span reads RDE. The Proton donor role is filled by E510. The Proton acceptor role is filled by E779. Residue H800 participates in alpha-L-rhamnose binding.

This sequence belongs to the glycosyl hydrolase 78 family.

It is found in the cell membrane. It catalyses the reaction Hydrolysis of terminal non-reducing alpha-L-rhamnose residues in alpha-L-rhamnosides.. Functionally, alpha-L-rhamnosidase involved in ulvan degradation. Ulvan is the main polysaccharide component of the Ulvales (green seaweed) cell wall. It is composed of disaccharide building blocks comprising 3-sulfated rhamnose (Rha3S) linked to D-glucuronic acid (GlcA), L-iduronic acid (IduA), or D-xylose (Xyl). Alpha-L-rhamnosidase converts Rha-Xyl-Rha3S, the product of a sulfatase acting on Rha3S-Xyl-Rha3S oligosaccharides, to Rha and Xyl-Rha3S. The enzyme is able to degrade p-nitrophenyl-alpha-L-rhamnopyranoside (PNP-Rha) in vitro. In Formosa agariphila (strain DSM 15362 / KCTC 12365 / LMG 23005 / KMM 3901 / M-2Alg 35-1), this protein is Alpha-L-rhamnosidase.